We begin with the raw amino-acid sequence, 156 residues long: Ribosomal RNA large subunit methyltransferase H (156 aa).

S-adenosyl-L-methionine contacts are provided by residues leucine 72, glycine 104, and 123 to 128 (LSKMTL).

The protein belongs to the RNA methyltransferase RlmH family. In terms of assembly, homodimer.

The protein localises to the cytoplasm. It catalyses the reaction pseudouridine(1915) in 23S rRNA + S-adenosyl-L-methionine = N(3)-methylpseudouridine(1915) in 23S rRNA + S-adenosyl-L-homocysteine + H(+). Specifically methylates the pseudouridine at position 1915 (m3Psi1915) in 23S rRNA. This Maridesulfovibrio salexigens (strain ATCC 14822 / DSM 2638 / NCIMB 8403 / VKM B-1763) (Desulfovibrio salexigens) protein is Ribosomal RNA large subunit methyltransferase H.